Reading from the N-terminus, the 547-residue chain is Sesterfisheric acid synthase (547 aa).

A helical membrane pass occupies residues 19 to 39; the sequence is IMGCSLGTGLLVSMIIYNYFF. Residues asparagine 341 and asparagine 404 are each glycosylated (N-linked (GlcNAc...) asparagine). Cysteine 490 lines the heme pocket.

This sequence belongs to the cytochrome P450 family. The cofactor is heme.

It is found in the membrane. It carries out the reaction sesterfisherol + 3 reduced [NADPH--hemoprotein reductase] + 3 O2 = sesterfisherate + 3 oxidized [NADPH--hemoprotein reductase] + 4 H2O + 4 H(+). Its pathway is secondary metabolite biosynthesis; terpenoid biosynthesis. Its function is as follows. Cytochrome P450 monooxygenase; part of the gene cluster that mediates the biosynthesis of sesterfisheric acid. The bifunctional terpene synthase NfSS converts DMAPP and IPP, and also GGPP, into sesterfisherol. The C-terminal prenyltransferase (PT) domain of NfSS catalyzes formation of GFPP, whereas the N-terminal terpene cyclase (TC) domain catalyzes the cyclization of GFPP to sesterfisherol. The cytochrome P450 monooxygenase NfP450 then catalyzes oxidative modifications of sesterfisherol into sesterfisheric acid. This is Sesterfisheric acid synthase from Neosartorya fischeri (strain ATCC 1020 / DSM 3700 / CBS 544.65 / FGSC A1164 / JCM 1740 / NRRL 181 / WB 181) (Aspergillus fischerianus).